The following is a 409-amino-acid chain: Tyrosine--tRNA ligase (409 aa).

Tyr39 serves as a coordination point for L-tyrosine. Positions 44–53 (PTAPSLHVGS) match the 'HIGH' region motif. L-tyrosine contacts are provided by Tyr176 and Gln180. A 'KMSKS' region motif is present at residues 236–240 (KMGKT). Lys239 contributes to the ATP binding site. Positions 346–409 (IGIVDALVGL…KKKHGILRKA (64 aa)) constitute an S4 RNA-binding domain.

The protein belongs to the class-I aminoacyl-tRNA synthetase family. TyrS type 1 subfamily. In terms of assembly, homodimer.

Its subcellular location is the cytoplasm. The catalysed reaction is tRNA(Tyr) + L-tyrosine + ATP = L-tyrosyl-tRNA(Tyr) + AMP + diphosphate + H(+). In terms of biological role, catalyzes the attachment of tyrosine to tRNA(Tyr) in a two-step reaction: tyrosine is first activated by ATP to form Tyr-AMP and then transferred to the acceptor end of tRNA(Tyr). This chain is Tyrosine--tRNA ligase, found in Novosphingobium aromaticivorans (strain ATCC 700278 / DSM 12444 / CCUG 56034 / CIP 105152 / NBRC 16084 / F199).